Consider the following 110-residue polypeptide: Small ubiquitin-related modifier 3 (110 aa).

Glycyl lysine isopeptide (Lys-Gly) (interchain with G-Cter in SUMO2) cross-links involve residues Lys-5 and Lys-7. A Glycyl lysine isopeptide (Lys-Gly) (interchain with G-Cter in SUMO); alternate cross-link involves residue Lys-11. Lys-11 is covalently cross-linked (Glycyl lysine isopeptide (Lys-Gly) (interchain with G-Cter in SUMO2); alternate). The 78-residue stretch at 15–92 folds into the Ubiquitin-like domain; sequence DHINLKVAGQ…IDVFQQQTGG (78 aa). Polar residues predominate over residues 88–101; sequence QQTGGSASRGSVPT. The tract at residues 88–110 is disordered; it reads QQTGGSASRGSVPTPNRCPDLCY. Gly-92 participates in a covalent cross-link: Glycyl lysine isopeptide (Gly-Lys) (interchain with K-? in acceptor proteins). Residues 93–110 constitute a propeptide that is removed on maturation; that stretch reads SASRGSVPTPNRCPDLCY.

Belongs to the ubiquitin family. SUMO subfamily. Interacts with SAE2 and UBE2I. Covalently attached to a number of proteins. Interacts with USP25 (via ts SIM domain); the interaction sumoylates USP25 and inhibits its ubiquitin hydrolyzing activity. Interacts with BMAL1. In terms of processing, polymeric chains can be formed through Lys-11 cross-linking. Cleavage of precursor form by SENP1, SENP2 or SENP5 is necessary for function.

The protein localises to the cytoplasm. It localises to the nucleus. The protein resides in the PML body. Functionally, ubiquitin-like protein which can be covalently attached to target lysines either as a monomer or as a lysine-linked polymer. Does not seem to be involved in protein degradation and may function as an antagonist of ubiquitin in the degradation process. Plays a role in a number of cellular processes such as nuclear transport, DNA replication and repair, mitosis and signal transduction. Covalent attachment to its substrates requires prior activation by the E1 complex SAE1-SAE2 and linkage to the E2 enzyme UBE2I, and can be promoted by an E3 ligase such as PIAS1-4, RANBP2 or CBX4. Plays a role in the regulation of sumoylation status of SETX. This chain is Small ubiquitin-related modifier 3, found in Mus musculus (Mouse).